The sequence spans 142 residues: MDIREILKVLPHRYPFLLVDRVLEADERRFKALKNVTFNEPHFQGHFPGHPVMPGVLILEAMAQAAVGALVRQPGFPQGGLAFLAGVEGARFRRPVYPGDTLILEGELLAFRRGVGKVAVRALVEGEERASATLTFVLQGAS.

Histidine 46 is an active-site residue.

The protein belongs to the thioester dehydratase family. FabZ subfamily.

The protein localises to the cytoplasm. It catalyses the reaction a (3R)-hydroxyacyl-[ACP] = a (2E)-enoyl-[ACP] + H2O. In terms of biological role, involved in unsaturated fatty acids biosynthesis. Catalyzes the dehydration of short chain beta-hydroxyacyl-ACPs and long chain saturated and unsaturated beta-hydroxyacyl-ACPs. This Thermus thermophilus (strain ATCC BAA-163 / DSM 7039 / HB27) protein is 3-hydroxyacyl-[acyl-carrier-protein] dehydratase FabZ.